The following is a 429-amino-acid chain: Probable M18 family aminopeptidase 2 (429 aa).

Residues H82, H156, and H401 each contribute to the Zn(2+) site.

The protein belongs to the peptidase M18 family. The cofactor is Zn(2+).

This is Probable M18 family aminopeptidase 2 from Pseudomonas paraeruginosa (strain DSM 24068 / PA7) (Pseudomonas aeruginosa (strain PA7)).